Here is a 556-residue protein sequence, read N- to C-terminus: Phenylalanine--tRNA ligase beta subunit (556 aa).

Residues methionine 269–proline 345 form the B5 domain. Mg(2+) is bound by residues aspartate 323, aspartate 329, glutamate 332, and glutamate 333.

Belongs to the phenylalanyl-tRNA synthetase beta subunit family. Type 2 subfamily. Tetramer of two alpha and two beta subunits. Mg(2+) serves as cofactor.

It localises to the cytoplasm. It catalyses the reaction tRNA(Phe) + L-phenylalanine + ATP = L-phenylalanyl-tRNA(Phe) + AMP + diphosphate + H(+). This chain is Phenylalanine--tRNA ligase beta subunit, found in Thermofilum pendens (strain DSM 2475 / Hrk 5).